Consider the following 147-residue polypeptide: Large ribosomal subunit protein bL9 (147 aa).

This sequence belongs to the bacterial ribosomal protein bL9 family.

In terms of biological role, binds to the 23S rRNA. In Campylobacter jejuni subsp. jejuni serotype O:2 (strain ATCC 700819 / NCTC 11168), this protein is Large ribosomal subunit protein bL9.